We begin with the raw amino-acid sequence, 327 residues long: Glutaminase (327 aa).

Residues Ser92, Asn143, Asn195, Tyr218, Tyr263, and Val281 each coordinate substrate.

It belongs to the glutaminase family. In terms of assembly, homotetramer.

The enzyme catalyses L-glutamine + H2O = L-glutamate + NH4(+). This Synechocystis sp. (strain ATCC 27184 / PCC 6803 / Kazusa) protein is Glutaminase.